The sequence spans 720 residues: Photosystem I P700 chlorophyll a apoprotein A1 (720 aa).

Helical transmembrane passes span Ile-62–Ala-85, Leu-148–His-171, Leu-186–Leu-210, Ile-282–Tyr-300, Trp-337–Tyr-360, Leu-376–Val-402, Ala-424–His-446, and Phe-522–Leu-540. [4Fe-4S] cluster is bound by residues Cys-564 and Cys-573. 2 consecutive transmembrane segments (helical) span residues His-580–Trp-601 and Leu-655–Phe-677. His-666 contacts chlorophyll a'. 2 residues coordinate chlorophyll a: Met-674 and Tyr-682. Phylloquinone is bound at residue Trp-683. The helical transmembrane segment at Ala-715 to His-720 threads the bilayer.

This sequence belongs to the PsaA/PsaB family. In terms of assembly, the PsaA/B heterodimer binds the P700 chlorophyll special pair and subsequent electron acceptors. PSI consists of a core antenna complex that captures photons, and an electron transfer chain that converts photonic excitation into a charge separation. The eukaryotic PSI reaction center is composed of at least 11 subunits. It depends on P700 is a chlorophyll a/chlorophyll a' dimer, A0 is one or more chlorophyll a, A1 is one or both phylloquinones and FX is a shared 4Fe-4S iron-sulfur center. as a cofactor.

It localises to the plastid. Its subcellular location is the chloroplast thylakoid membrane. It catalyses the reaction reduced [plastocyanin] + hnu + oxidized [2Fe-2S]-[ferredoxin] = oxidized [plastocyanin] + reduced [2Fe-2S]-[ferredoxin]. Functionally, psaA and PsaB bind P700, the primary electron donor of photosystem I (PSI), as well as the electron acceptors A0, A1 and FX. PSI is a plastocyanin-ferredoxin oxidoreductase, converting photonic excitation into a charge separation, which transfers an electron from the donor P700 chlorophyll pair to the spectroscopically characterized acceptors A0, A1, FX, FA and FB in turn. Oxidized P700 is reduced on the lumenal side of the thylakoid membrane by plastocyanin. The protein is Photosystem I P700 chlorophyll a apoprotein A1 of Ephedra tweediana (Vining horsetail).